A 245-amino-acid chain; its full sequence is Phycocyanobilin:ferredoxin oxidoreductase (245 aa).

It belongs to the HY2 family.

It catalyses the reaction (2R,3Z)-phycocyanobilin + 4 oxidized [2Fe-2S]-[ferredoxin] = biliverdin IXalpha + 4 reduced [2Fe-2S]-[ferredoxin] + 4 H(+). Its function is as follows. Catalyzes the four-electron reduction of biliverdin IX-alpha (2-electron reduction at both the A and D rings); the reaction proceeds via an isolatable 2-electron intermediate, 181,182-dihydrobiliverdin. The protein is Phycocyanobilin:ferredoxin oxidoreductase of Trichodesmium erythraeum (strain IMS101).